A 118-amino-acid polypeptide reads, in one-letter code: Large ribosomal subunit protein bL20 (118 aa).

The protein belongs to the bacterial ribosomal protein bL20 family.

Its function is as follows. Binds directly to 23S ribosomal RNA and is necessary for the in vitro assembly process of the 50S ribosomal subunit. It is not involved in the protein synthesizing functions of that subunit. The polypeptide is Large ribosomal subunit protein bL20 (Desulfovibrio desulfuricans (strain ATCC 27774 / DSM 6949 / MB)).